The sequence spans 814 residues: Immunoglobulin superfamily DCC subclass member 3 (814 aa).

Positions 1-35 are cleaved as a signal peptide; sequence MAVQRAASPRRPPAPLWPRLLLPLLLLLLPAPSEG. Ig-like C2-type domains lie at 36–139, 140–220, 238–321, and 329–416; these read LGHS…ATMS, DFHV…IRIS, PAIL…RTAQ, and PAEF…ARLT. Intrachain disulfides connect Cys-63/Cys-117 and Cys-160/Cys-209. A glycan (N-linked (GlcNAc...) asparagine) is linked at Asn-93. N-linked (GlcNAc...) asparagine glycosylation is present at Asn-246. 2 disulfide bridges follow: Cys-259/Cys-307 and Cys-351/Cys-400. Asn-381 and Asn-382 each carry an N-linked (GlcNAc...) asparagine glycan. Fibronectin type-III domains are found at residues 426 to 520 and 523 to 618; these read PPRN…TLGE and APPP…ASER. N-linked (GlcNAc...) asparagine glycans are attached at residues Asn-580, Asn-604, and Asn-634. The helical transmembrane segment at 641–661 threads the bilayer; the sequence is IVIGIHIGVTCIIFCVLFLLF. 2 disordered regions span residues 722–743 and 762–814; these read PPAS…APAP and GKTT…HSEQ. Residues 770–781 show a composition bias toward low complexity; it reads TEATAPCAGLAA.

The protein belongs to the immunoglobulin superfamily. DCC family.

Its subcellular location is the membrane. The chain is Immunoglobulin superfamily DCC subclass member 3 (IGDCC3) from Homo sapiens (Human).